Reading from the N-terminus, the 429-residue chain is Phosphoribosylamine--glycine ligase (429 aa).

An ATP-grasp domain is found at 109–316; sequence KDFLARHNIP…LVELCLAACE (208 aa). Residue 135–196 coordinates ATP; the sequence is LREKGAPIVI…EEFLDGEEAS (62 aa). A disordered region spans residues 212-237; the sequence is SQDHKRVGDKDTGPNTGGMGAYSPAP. A compositionally biased stretch (basic and acidic residues) spans 213 to 223; that stretch reads QDHKRVGDKDT. Mg(2+) contacts are provided by Glu-286 and Asn-288.

Belongs to the GARS family. Monomer. Requires Mg(2+) as cofactor. It depends on Mn(2+) as a cofactor.

It carries out the reaction 5-phospho-beta-D-ribosylamine + glycine + ATP = N(1)-(5-phospho-beta-D-ribosyl)glycinamide + ADP + phosphate + H(+). Its pathway is purine metabolism; IMP biosynthesis via de novo pathway; N(1)-(5-phospho-D-ribosyl)glycinamide from 5-phospho-alpha-D-ribose 1-diphosphate: step 2/2. The protein is Phosphoribosylamine--glycine ligase of Escherichia coli O157:H7.